The sequence spans 207 residues: Large ribosomal subunit protein bL25 (207 aa).

The protein belongs to the bacterial ribosomal protein bL25 family. CTC subfamily. Part of the 50S ribosomal subunit; part of the 5S rRNA/L5/L18/L25 subcomplex. Contacts the 5S rRNA. Binds to the 5S rRNA independently of L5 and L18.

In terms of biological role, this is one of the proteins that binds to the 5S RNA in the ribosome where it forms part of the central protuberance. The sequence is that of Large ribosomal subunit protein bL25 from Dictyoglomus thermophilum (strain ATCC 35947 / DSM 3960 / H-6-12).